The sequence spans 211 residues: Large ribosomal subunit protein uL3 (211 aa).

N5-methylglutamine is present on Gln-150.

The protein belongs to the universal ribosomal protein uL3 family. As to quaternary structure, part of the 50S ribosomal subunit. Forms a cluster with proteins L14 and L19. In terms of processing, methylated by PrmB.

One of the primary rRNA binding proteins, it binds directly near the 3'-end of the 23S rRNA, where it nucleates assembly of the 50S subunit. This is Large ribosomal subunit protein uL3 from Pseudomonas entomophila (strain L48).